The chain runs to 416 residues: Gamma-glutamyl phosphate reductase (416 aa).

This sequence belongs to the gamma-glutamyl phosphate reductase family.

The protein resides in the cytoplasm. It carries out the reaction L-glutamate 5-semialdehyde + phosphate + NADP(+) = L-glutamyl 5-phosphate + NADPH + H(+). Its pathway is amino-acid biosynthesis; L-proline biosynthesis; L-glutamate 5-semialdehyde from L-glutamate: step 2/2. In terms of biological role, catalyzes the NADPH-dependent reduction of L-glutamate 5-phosphate into L-glutamate 5-semialdehyde and phosphate. The product spontaneously undergoes cyclization to form 1-pyrroline-5-carboxylate. The chain is Gamma-glutamyl phosphate reductase from Vibrio cholerae serotype O1 (strain ATCC 39541 / Classical Ogawa 395 / O395).